We begin with the raw amino-acid sequence, 112 residues long: Large ribosomal subunit protein P2 (112 aa).

The tract at residues 81–112 (VETAEAKKEDKKEEKKEEEEEEEDDLGFSLFG) is disordered. Residues 84 to 95 (AEAKKEDKKEEK) are compositionally biased toward basic and acidic residues. Residues 96–106 (KEEEEEEEDDL) are compositionally biased toward acidic residues.

It belongs to the eukaryotic ribosomal protein P1/P2 family. As to quaternary structure, P1 and P2 exist as dimers at the large ribosomal subunit. Post-translationally, phosphorylated.

Functionally, plays an important role in the elongation step of protein synthesis. The protein is Large ribosomal subunit protein P2 (MAL3P3.19) of Plasmodium falciparum (isolate 3D7).